The sequence spans 426 residues: Serine--tRNA ligase (426 aa).

227 to 229 is a binding site for L-serine; that stretch reads TSE. ATP is bound by residues 258–260 and Val274; that span reads RKE. Glu281 contributes to the L-serine binding site. An ATP-binding site is contributed by 345–348; the sequence is ELTS. Position 380 (Thr380) interacts with L-serine.

This sequence belongs to the class-II aminoacyl-tRNA synthetase family. Type-1 seryl-tRNA synthetase subfamily. As to quaternary structure, homodimer. The tRNA molecule binds across the dimer.

It localises to the cytoplasm. The catalysed reaction is tRNA(Ser) + L-serine + ATP = L-seryl-tRNA(Ser) + AMP + diphosphate + H(+). The enzyme catalyses tRNA(Sec) + L-serine + ATP = L-seryl-tRNA(Sec) + AMP + diphosphate + H(+). Its pathway is aminoacyl-tRNA biosynthesis; selenocysteinyl-tRNA(Sec) biosynthesis; L-seryl-tRNA(Sec) from L-serine and tRNA(Sec): step 1/1. Catalyzes the attachment of serine to tRNA(Ser). Is also able to aminoacylate tRNA(Sec) with serine, to form the misacylated tRNA L-seryl-tRNA(Sec), which will be further converted into selenocysteinyl-tRNA(Sec). The sequence is that of Serine--tRNA ligase from Clavibacter michiganensis subsp. michiganensis (strain NCPPB 382).